Consider the following 225-residue polypeptide: Pathogenesis-related 5 protein Jun a 3.0101 (225 aa).

The signal sequence occupies residues Met-1 to Val-26. 8 disulfides stabilise this stretch: Cys-35–Cys-224, Cys-76–Cys-86, Cys-91–Cys-97, Cys-139–Cys-213, Cys-144–Cys-197, Cys-152–Cys-162, Cys-166–Cys-175, and Cys-176–Cys-184. 3 igE-binding regions span residues Ala-146–Lys-157, Val-158–Lys-170, and Asn-178–Lys-191.

The protein belongs to the thaumatin family. Expressed in pollen (at protein level).

This Juniperus ashei (Ozark white cedar) protein is Pathogenesis-related 5 protein Jun a 3.0101.